The following is a 263-amino-acid chain: Endonuclease 8 (263 aa).

The active-site Schiff-base intermediate with DNA is Pro2. Residue Glu3 is the Proton donor of the active site. Catalysis depends on Lys53, which acts as the Proton donor; for beta-elimination activity. 3 residues coordinate DNA: Gln70, Arg125, and Asn169. The FPG-type zinc finger occupies 229–263 (KVFHRDGEACERCGGIIEKTTLSSRPFYWCAHCQK). Arg253 (proton donor; for delta-elimination activity) is an active-site residue.

This sequence belongs to the FPG family. Requires Zn(2+) as cofactor.

The catalysed reaction is 2'-deoxyribonucleotide-(2'-deoxyribose 5'-phosphate)-2'-deoxyribonucleotide-DNA = a 3'-end 2'-deoxyribonucleotide-(2,3-dehydro-2,3-deoxyribose 5'-phosphate)-DNA + a 5'-end 5'-phospho-2'-deoxyribonucleoside-DNA + H(+). In terms of biological role, involved in base excision repair of DNA damaged by oxidation or by mutagenic agents. Acts as a DNA glycosylase that recognizes and removes damaged bases. Has a preference for oxidized pyrimidines, such as thymine glycol, 5,6-dihydrouracil and 5,6-dihydrothymine. Has AP (apurinic/apyrimidinic) lyase activity and introduces nicks in the DNA strand. Cleaves the DNA backbone by beta-delta elimination to generate a single-strand break at the site of the removed base with both 3'- and 5'-phosphates. The protein is Endonuclease 8 of Salmonella typhi.